A 445-amino-acid polypeptide reads, in one-letter code: tRNA(Ile)-lysidine synthase (445 aa).

30 to 35 contacts ATP; that stretch reads SGGLDS.

Belongs to the tRNA(Ile)-lysidine synthase family.

It is found in the cytoplasm. The enzyme catalyses cytidine(34) in tRNA(Ile2) + L-lysine + ATP = lysidine(34) in tRNA(Ile2) + AMP + diphosphate + H(+). Its function is as follows. Ligates lysine onto the cytidine present at position 34 of the AUA codon-specific tRNA(Ile) that contains the anticodon CAU, in an ATP-dependent manner. Cytidine is converted to lysidine, thus changing the amino acid specificity of the tRNA from methionine to isoleucine. The sequence is that of tRNA(Ile)-lysidine synthase from Alkalilimnicola ehrlichii (strain ATCC BAA-1101 / DSM 17681 / MLHE-1).